A 269-amino-acid chain; its full sequence is Hydroxyethylthiazole kinase (269 aa).

Substrate is bound at residue M42. ATP is bound by residues R118 and S164. G191 provides a ligand contact to substrate.

It belongs to the Thz kinase family. Mg(2+) serves as cofactor.

It carries out the reaction 5-(2-hydroxyethyl)-4-methylthiazole + ATP = 4-methyl-5-(2-phosphooxyethyl)-thiazole + ADP + H(+). The protein operates within cofactor biosynthesis; thiamine diphosphate biosynthesis; 4-methyl-5-(2-phosphoethyl)-thiazole from 5-(2-hydroxyethyl)-4-methylthiazole: step 1/1. Its function is as follows. Catalyzes the phosphorylation of the hydroxyl group of 4-methyl-5-beta-hydroxyethylthiazole (THZ). This chain is Hydroxyethylthiazole kinase, found in Listeria monocytogenes serotype 4b (strain F2365).